A 410-amino-acid chain; its full sequence is D-3-phosphoglycerate dehydrogenase (410 aa).

NAD(+) contacts are provided by residues histidine 161–isoleucine 162, aspartate 181, alanine 238–arginine 240, and aspartate 264. Arginine 240 is a catalytic residue. The active site involves glutamate 269. Residue histidine 292 is the Proton donor of the active site. Histidine 292–glycine 295 provides a ligand contact to NAD(+). The region spanning arginine 339 to tyrosine 410 is the ACT domain.

This sequence belongs to the D-isomer specific 2-hydroxyacid dehydrogenase family. Homotetramer.

The enzyme catalyses (2R)-3-phosphoglycerate + NAD(+) = 3-phosphooxypyruvate + NADH + H(+). It carries out the reaction (R)-2-hydroxyglutarate + NAD(+) = 2-oxoglutarate + NADH + H(+). The protein operates within amino-acid biosynthesis; L-serine biosynthesis; L-serine from 3-phospho-D-glycerate: step 1/3. With respect to regulation, in bacteria displays feedback inhibition by L-serine. Its function is as follows. Catalyzes the reversible oxidation of 3-phospho-D-glycerate to 3-phosphonooxypyruvate, the first step of the phosphorylated L-serine biosynthesis pathway. Also catalyzes the reversible oxidation of 2-hydroxyglutarate to 2-oxoglutarate. This chain is D-3-phosphoglycerate dehydrogenase (serA), found in Escherichia coli O6:H1 (strain CFT073 / ATCC 700928 / UPEC).